A 174-amino-acid polypeptide reads, in one-letter code: uncharacterized protein (174 aa).

This is an uncharacterized protein from Dictyostelium discoideum (Social amoeba).